A 621-amino-acid chain; its full sequence is TOX high mobility group box family member 4 (621 aa).

Disordered regions lie at residues 153-227 (LGLS…QKPV) and 305-333 (LDPA…ASIE). Threonine 176 carries the post-translational modification Phosphothreonine. Serine 178, serine 181, and serine 182 each carry phosphoserine. Basic and acidic residues predominate over residues 183-193 (LHEDGVEDFRR). Basic residues predominate over residues 208 to 218 (KQKAPKKRKKK). The short motif at 213 to 218 (KKRKKK) is the Nuclear localization signal element. The HMG box DNA-binding region spans 223–291 (PQKPVSAYAL…EYLKALAAYK (69 aa)). The segment covering 307–319 (PAPPSQTPSPPPM) has biased composition (pro residues). Residue threonine 313 is modified to Phosphothreonine. Phosphoserine is present on serine 315. Positions 320-333 (ATVDPASPAPASIE) are enriched in low complexity. Arginine 481 bears the Asymmetric dimethylarginine mark. Polar residues predominate over residues 510–525 (PTVESSPERPMNNSPE). The interval 510 to 529 (PTVESSPERPMNNSPEAHTV) is disordered. Phosphoserine is present on residues serine 533, serine 550, serine 552, serine 560, serine 562, and serine 567.

As to quaternary structure, component of the PNUTS-PP1 phosphatase complex, composed of PPP1R10/PNUTS, TOX4, WDR82 and PPP1CA or PPP1CB or PPP1CC. Interacts with PPP1R10/PNUTS. Interacts with FOXO1 and CREB1 (increased by cAMP); FOXO1 and CREB1 are required for full induction of TOX4-dependent activity and the interactions are inhibited by insulin. In terms of tissue distribution, expressed in liver (at protein level).

The protein localises to the nucleus. The protein resides in the chromosome. With respect to regulation, in liver, recruited to target gene promoters following treatment with dexamethasone and cAMP. Binding is decreased in presence of insulin. Functionally, transcription factor that modulates cell fate reprogramming from the somatic state to the pluripotent and neuronal fate. In liver, controls the expression of hormone-regulated gluconeogenic genes such as G6PC1 and PCK1. This regulation is independent of the insulin receptor activation. Also acts as a regulatory component of protein phosphatase 1 (PP1) complexes. Component of the PNUTS-PP1 protein phosphatase complex, a PP1 complex that regulates RNA polymerase II transcription pause-release. PNUTS-PP1 also plays a role in the control of chromatin structure and cell cycle progression during the transition from mitosis into interphase. In Homo sapiens (Human), this protein is TOX high mobility group box family member 4.